A 415-amino-acid chain; its full sequence is Erythronolide mycarosyltransferase (415 aa).

This sequence belongs to the glycosyltransferase 28 family.

It carries out the reaction dTDP-beta-L-mycarose + erythronolide B = 3-O-alpha-L-mycarosylerythronolide B + dTDP + H(+). In terms of biological role, involved in the biosynthesis of the macrolide antibiotic erythromycin. Catalyzes the reversible transfer of mycarosyl from dTDP-beta-L-mycarose to erythronolide B to yield 3-alpha-L-mycarosylerythronolide B. It can also use TDP-beta-L-cladinose. In Saccharopolyspora erythraea (Streptomyces erythraeus), this protein is Erythronolide mycarosyltransferase.